The sequence spans 187 residues: Peptide deformylase 2 (187 aa).

Fe cation contacts are provided by C107 and H149. The active site involves E150. H153 serves as a coordination point for Fe cation.

Belongs to the polypeptide deformylase family. The cofactor is Fe(2+).

It carries out the reaction N-terminal N-formyl-L-methionyl-[peptide] + H2O = N-terminal L-methionyl-[peptide] + formate. Removes the formyl group from the N-terminal Met of newly synthesized proteins. Requires at least a dipeptide for an efficient rate of reaction. N-terminal L-methionine is a prerequisite for activity but the enzyme has broad specificity at other positions. In Gloeobacter violaceus (strain ATCC 29082 / PCC 7421), this protein is Peptide deformylase 2.